The primary structure comprises 94 residues: Alpha-elapitoxin-Nss2a (94 aa).

Positions 1–21 are cleaved as a signal peptide; sequence MKTLLLTLVVVTIVCLDLGDS. 5 cysteine pairs are disulfide-bonded: Cys-24-Cys-41, Cys-34-Cys-62, Cys-47-Cys-51, Cys-66-Cys-77, and Cys-78-Cys-83.

Belongs to the three-finger toxin family. Long-chain subfamily. Type II alpha-neurotoxin sub-subfamily. As to expression, expressed by the venom gland.

It is found in the secreted. Its function is as follows. Binds with high affinity to muscular (alpha-1/CHRNA1) and neuronal (alpha-7/CHRNA7) nicotinic acetylcholine receptor (nAChR) and inhibits acetylcholine from binding to the receptor, thereby impairing neuromuscular and neuronal transmission. This chain is Alpha-elapitoxin-Nss2a, found in Notechis scutatus scutatus (Mainland tiger snake).